The primary structure comprises 346 residues: NADH-ubiquinone oxidoreductase chain 2 (346 aa).

A run of 11 helical transmembrane segments spans residues 3-23 (PLIL…VMAS), 25-45 (HWLM…PILM), 59-79 (YFLT…INLM), 96-116 (IIMT…FWVP), 122-142 (ISLT…MSIL), 149-169 (INLN…GWGG), 178-198 (IMAY…VYNP), 200-220 (LTML…MLFI), 237-257 (APLI…LPPL), 274-294 (SSII…YFYM), and 322-342 (ITLL…TPML).

Belongs to the complex I subunit 2 family. Core subunit of respiratory chain NADH dehydrogenase (Complex I) which is composed of 45 different subunits. Interacts with TMEM242.

The protein localises to the mitochondrion inner membrane. It catalyses the reaction a ubiquinone + NADH + 5 H(+)(in) = a ubiquinol + NAD(+) + 4 H(+)(out). In terms of biological role, core subunit of the mitochondrial membrane respiratory chain NADH dehydrogenase (Complex I) which catalyzes electron transfer from NADH through the respiratory chain, using ubiquinone as an electron acceptor. Essential for the catalytic activity and assembly of complex I. This chain is NADH-ubiquinone oxidoreductase chain 2, found in Equus asinus (Donkey).